The sequence spans 94 residues: MKRVHVIVEGRVQGVGFRYFVQHEALKRQLTGWVKNNDDGTVEMEVQGNESALQLFLDTIEAGTMFAKVARMHIEPRDVRSDEKQFRIMYGSGF.

Residues 3–90 (RVHVIVEGRV…SDEKQFRIMY (88 aa)) enclose the Acylphosphatase-like domain. Catalysis depends on residues Arg18 and Asn36.

Belongs to the acylphosphatase family.

It carries out the reaction an acyl phosphate + H2O = a carboxylate + phosphate + H(+). The sequence is that of Acylphosphatase (acyP) from Geobacillus kaustophilus (strain HTA426).